The sequence spans 185 residues: Ribosome-recycling factor (185 aa).

Belongs to the RRF family.

The protein localises to the cytoplasm. Responsible for the release of ribosomes from messenger RNA at the termination of protein biosynthesis. May increase the efficiency of translation by recycling ribosomes from one round of translation to another. The polypeptide is Ribosome-recycling factor (Klebsiella pneumoniae (strain 342)).